Reading from the N-terminus, the 131-residue chain is Profilin-A (131 aa).

This sequence belongs to the profilin family. In terms of assembly, occurs in many kinds of cells as a complex with monomeric actin in a 1:1 ratio.

It localises to the cytoplasm. The protein localises to the cytoskeleton. Functionally, binds to actin and affects the structure of the cytoskeleton. At high concentrations, profilin prevents the polymerization of actin, whereas it enhances it at low concentrations. By binding to PIP2, it inhibits the formation of IP3 and DG. May serve as a modulator in pollen germination and pollen tube growth. The polypeptide is Profilin-A (Oryza sativa subsp. japonica (Rice)).